The chain runs to 151 residues: Ubiquitin-conjugating enzyme E2 2 (151 aa).

Residues 1–26 (MSTSARRRLMRDFKRMQTDPPAGVSA) are disordered. In terms of domain architecture, UBC core spans 4–150 (SARRRLMRDF…VRETVEKSWE (147 aa)). C88 functions as the Glycyl thioester intermediate in the catalytic mechanism.

This sequence belongs to the ubiquitin-conjugating enzyme family.

Its subcellular location is the cytoplasm. It is found in the nucleus. The enzyme catalyses S-ubiquitinyl-[E1 ubiquitin-activating enzyme]-L-cysteine + [E2 ubiquitin-conjugating enzyme]-L-cysteine = [E1 ubiquitin-activating enzyme]-L-cysteine + S-ubiquitinyl-[E2 ubiquitin-conjugating enzyme]-L-cysteine.. It functions in the pathway protein modification; protein ubiquitination. In terms of biological role, catalyzes the covalent attachment of ubiquitin to other proteins. Plays a role in transcription regulation by catalyzing the monoubiquitination of histone H2B to form H2BK123ub1. H2BK123ub1 gives a specific tag for epigenetic transcriptional activation and is also a prerequisite for H3K4me and H3K79me formation. Also involved in postreplication repair of UV-damaged DNA, in N-end rule-dependent protein degradation and in sporulation. This chain is Ubiquitin-conjugating enzyme E2 2 (ubc2), found in Aspergillus fumigatus (strain ATCC MYA-4609 / CBS 101355 / FGSC A1100 / Af293) (Neosartorya fumigata).